Consider the following 455-residue polypeptide: Putative RNA polymerase II subunit B1 CTD phosphatase rpap-2 (455 aa).

Residues 36 to 121 form an RTR1-type zinc finger; the sequence is EHLPHLHCLG…LDEHPLWITG (86 aa). Residues C59, C64, C97, and C101 each contribute to the Zn(2+) site.

The protein belongs to the RPAP2 family.

The protein resides in the nucleus. The enzyme catalyses O-phospho-L-seryl-[protein] + H2O = L-seryl-[protein] + phosphate. The catalysed reaction is O-phospho-L-threonyl-[protein] + H2O = L-threonyl-[protein] + phosphate. Putative RNA polymerase II subunit B1 C-terminal domain (CTD) phosphatase involved in RNA polymerase II transcription regulation. This Caenorhabditis elegans protein is Putative RNA polymerase II subunit B1 CTD phosphatase rpap-2.